A 52-amino-acid chain; its full sequence is UPF0391 membrane protein Tgr7_2500 (52 aa).

A run of 2 helical transmembrane segments spans residues 4-24 and 29-49; these read WALI…SGVA and WIAQ…LLGG.

This sequence belongs to the UPF0391 family.

It is found in the cell membrane. In Thioalkalivibrio sulfidiphilus (strain HL-EbGR7), this protein is UPF0391 membrane protein Tgr7_2500.